Here is a 124-residue protein sequence, read N- to C-terminus: Large ribosomal subunit protein bL12 (124 aa).

Belongs to the bacterial ribosomal protein bL12 family. As to quaternary structure, homodimer. Part of the ribosomal stalk of the 50S ribosomal subunit. Forms a multimeric L10(L12)X complex, where L10 forms an elongated spine to which 2 to 4 L12 dimers bind in a sequential fashion. Binds GTP-bound translation factors.

Functionally, forms part of the ribosomal stalk which helps the ribosome interact with GTP-bound translation factors. Is thus essential for accurate translation. This chain is Large ribosomal subunit protein bL12, found in Burkholderia cenocepacia (strain HI2424).